We begin with the raw amino-acid sequence, 161 residues long: Nucleotide-binding protein SAR11_0692 (161 aa).

This sequence belongs to the YajQ family.

Nucleotide-binding protein. This chain is Nucleotide-binding protein SAR11_0692, found in Pelagibacter ubique (strain HTCC1062).